The following is a 419-amino-acid chain: MLAARTGAAGSQIAEESSKLRKQAAFSGGSKDRSPKKASENVKDSSLSPSGQSQVRARQLALLREVEMNWYLKLCELSSEHTTAYTTGMPHRNLGKSGLRVSCLGLGTWVTFGGQISDEVAERLMTIAYESGVNLFDTAEVYAAGKAEVILGSIIKKKGWRRSSLVITTKLYWGGKAETERGLSRKHIIEGLKGSLQRLQLEYVDVVFANRPDSNTPMEEIVRAMTHVINQGMAMYWGTSRWSAMEIMEAYSVARQFNMIPPVCEQAEYHLFQREKVEVQLPELYHKIGVGAMTWSPLACGIISGKYGNGVPESSRASLKCYQWLKERIVSEEGRKQQNKLKDLSPIAERLGCTLPQLAVAWCLRNEGVSSVLLGSSTPEQLIENLGAIQVLPKMTSHVVNEIDNILRNKPYSKKDYRS.

Residues 1–51 (MLAARTGAAGSQIAEESSKLRKQAAFSGGSKDRSPKKASENVKDSSLSPSG) form a disordered region. The span at 30–43 (SKDRSPKKASENVK) shows a compositional bias: basic and acidic residues. NADP(+)-binding residues include Thr108, Trp109, Gln115, and Asp137. Tyr142 (proton donor/acceptor) is an active-site residue. Asn210, Ser240, Arg241, Gln266, Trp295, Ser296, Pro297, Leu298, Ala299, Cys300, Lys306, Arg316, Gly375, Ser377, Gln381, Glu384, and Asn385 together coordinate NADP(+).

The protein belongs to the shaker potassium channel beta subunit family. In terms of assembly, homotetramer. Interaction with tetrameric potassium channel alpha subunits gives rise to a heterooctamer. Identified in potassium channel complexes containing KCNA1, KCNA2, KCNA4, KCNA5, KCNA6, KCNAB1 and KCNAB2. Part of a complex containing KCNA1, KCNA4 and LGI1; interaction with LGI1 inhibits down-regulation of KCNA1 channel activity. Interacts with the dimer formed by GNB1 and GNG2; this enhances KCNA1 binding. Interacts with SQSTM1. As to expression, detected in portal vein myocytes (at protein level).

It is found in the cytoplasm. Its subcellular location is the membrane. The protein localises to the cell membrane. It catalyses the reaction a primary alcohol + NADP(+) = an aldehyde + NADPH + H(+). It carries out the reaction a secondary alcohol + NADP(+) = a ketone + NADPH + H(+). In terms of biological role, regulatory subunit of the voltage-gated potassium (Kv) channels composed of pore-forming and potassium-conducting alpha subunits and of regulatory beta subunits. The beta-1/KCNAB1 cytoplasmic subunit mediates closure of delayed rectifier potassium channels by physically obstructing the pore via its N-terminal domain and increases the speed of channel closure for other family members. Promotes the inactivation of KCNA1, KCNA2, KCNA4, KCNA5 and KCNA6 alpha subunit-containing channels. Displays nicotinamide adenine dinucleotide phosphate (NADPH)-dependent aldoketoreductase activity by catalyzing the NADPH-dependent reduction of a variety of endogenous aldehydes and ketones. The binding of NADPH is required for efficient down-regulation of potassium channel activity. Oxidation of the bound NADPH restrains N-terminal domain from blocking the channel, thereby decreasing N-type inactivation of potassium channel activity. The chain is Voltage-gated potassium channel subunit beta-1 (KCNAB1) from Oryctolagus cuniculus (Rabbit).